Reading from the N-terminus, the 196-residue chain is Dephospho-CoA kinase (196 aa).

One can recognise a DPCK domain in the interval 5–196 (IIGLTGGIAT…QVDIALNFEL (192 aa)). 13 to 18 (ATGKTT) is an ATP binding site.

The protein belongs to the CoaE family.

The protein localises to the cytoplasm. The catalysed reaction is 3'-dephospho-CoA + ATP = ADP + CoA + H(+). It participates in cofactor biosynthesis; coenzyme A biosynthesis; CoA from (R)-pantothenate: step 5/5. Its function is as follows. Catalyzes the phosphorylation of the 3'-hydroxyl group of dephosphocoenzyme A to form coenzyme A. The polypeptide is Dephospho-CoA kinase (Nostoc sp. (strain PCC 7120 / SAG 25.82 / UTEX 2576)).